The following is a 514-amino-acid chain: Type-2 serine--tRNA ligase (514 aa).

Ala313 serves as a coordination point for L-serine. Cys315 contributes to the Zn(2+) binding site. Arg344 contacts L-serine. Residues 344 to 346 (RWE) and 355 to 356 (RV) contribute to the ATP site. 361–363 (RGE) contributes to the L-serine binding site. Positions 363 and 470 each coordinate Zn(2+). Arg477 is a binding site for ATP.

It belongs to the class-II aminoacyl-tRNA synthetase family. Type-2 seryl-tRNA synthetase subfamily. As to quaternary structure, homodimer. The cofactor is Zn(2+).

The protein localises to the cytoplasm. It catalyses the reaction tRNA(Ser) + L-serine + ATP = L-seryl-tRNA(Ser) + AMP + diphosphate + H(+). The catalysed reaction is tRNA(Sec) + L-serine + ATP = L-seryl-tRNA(Sec) + AMP + diphosphate + H(+). It participates in aminoacyl-tRNA biosynthesis; selenocysteinyl-tRNA(Sec) biosynthesis; L-seryl-tRNA(Sec) from L-serine and tRNA(Sec): step 1/1. Catalyzes the attachment of serine to tRNA(Ser). Is also able to aminoacylate tRNA(Sec) with serine, to form the misacylated tRNA L-seryl-tRNA(Sec), which will be further converted into selenocysteinyl-tRNA(Sec). The chain is Type-2 serine--tRNA ligase (serS) from Methanococcus maripaludis (strain DSM 14266 / JCM 13030 / NBRC 101832 / S2 / LL).